We begin with the raw amino-acid sequence, 701 residues long: Epithelial splicing regulatory protein 2 (701 aa).

RRM domains are found at residues 226–303, 327–407, and 448–523; these read TVIR…KATG, VIIR…RSTA, and CVRL…VEVF.

The protein belongs to the ESRP family.

The protein resides in the nucleus. MRNA splicing factor that regulates the formation of epithelial cell-specific isoforms. Specifically regulates the expression of FGFR2-IIIb, an epithelial cell-specific isoform of FGFR2. Acts by directly binding specific sequences in mRNAs. Binds the GU-rich sequence motifs in the ISE/ISS-3, a cis-element regulatory region present in the mRNA of FGFR2. In Gallus gallus (Chicken), this protein is Epithelial splicing regulatory protein 2 (ESRP2).